A 329-amino-acid polypeptide reads, in one-letter code: Beta-ketoacyl-[acyl-carrier-protein] synthase III (329 aa).

Active-site residues include Cys-112 and His-253. The tract at residues 254-258 (QANQR) is ACP-binding. Asn-283 is an active-site residue.

The protein belongs to the thiolase-like superfamily. FabH family. In terms of assembly, homodimer.

Its subcellular location is the cytoplasm. It carries out the reaction malonyl-[ACP] + acetyl-CoA + H(+) = 3-oxobutanoyl-[ACP] + CO2 + CoA. It functions in the pathway lipid metabolism; fatty acid biosynthesis. Catalyzes the condensation reaction of fatty acid synthesis by the addition to an acyl acceptor of two carbons from malonyl-ACP. Catalyzes the first condensation reaction which initiates fatty acid synthesis and may therefore play a role in governing the total rate of fatty acid production. Possesses both acetoacetyl-ACP synthase and acetyl transacylase activities. Its substrate specificity determines the biosynthesis of branched-chain and/or straight-chain of fatty acids. This chain is Beta-ketoacyl-[acyl-carrier-protein] synthase III, found in Gloeobacter violaceus (strain ATCC 29082 / PCC 7421).